Here is a 399-residue protein sequence, read N- to C-terminus: Phosphoglycerate kinase (399 aa).

Residues D21–N23, R37, H60–R63, R119, and R152 contribute to the substrate site. ATP-binding positions include K205, G296, E327, and G353–T356.

Belongs to the phosphoglycerate kinase family. As to quaternary structure, monomer.

It is found in the cytoplasm. The catalysed reaction is (2R)-3-phosphoglycerate + ATP = (2R)-3-phospho-glyceroyl phosphate + ADP. The protein operates within carbohydrate degradation; glycolysis; pyruvate from D-glyceraldehyde 3-phosphate: step 2/5. The sequence is that of Phosphoglycerate kinase from Sulfurimonas denitrificans (strain ATCC 33889 / DSM 1251) (Thiomicrospira denitrificans (strain ATCC 33889 / DSM 1251)).